Here is a 286-residue protein sequence, read N- to C-terminus: Prohibitin-6, mitochondrial (286 aa).

Over 1–12 (MNFKNVKVPKGP) the chain is Mitochondrial matrix. The helical; Signal-anchor for type II membrane protein transmembrane segment at 13-35 (GGGVIAAVVIGGLSLYGATHTLY) threads the bilayer. Residues 36-286 (NVDGGHRAIV…AMDLDVKPKK (251 aa)) lie on the Mitochondrial intermembrane side of the membrane.

Belongs to the prohibitin family. Component of a prohibitin multimeric complex in mitochondrial membranes. Mostly expressed in proliferative tissues, including vasculature, shoot and root apical tissues.

The protein localises to the mitochondrion inner membrane. Its function is as follows. Prohibitin probably acts as a holdase/unfoldase for the stabilization of newly synthesized mitochondrial proteins. The chain is Prohibitin-6, mitochondrial (PHB6) from Arabidopsis thaliana (Mouse-ear cress).